The primary structure comprises 295 residues: Nucleotide-binding protein LSL_1171 (295 aa).

13 to 20 (GMSGAGKT) lines the ATP pocket. 63-66 (DLRS) lines the GTP pocket.

Belongs to the RapZ-like family.

Displays ATPase and GTPase activities. This chain is Nucleotide-binding protein LSL_1171, found in Ligilactobacillus salivarius (strain UCC118) (Lactobacillus salivarius).